The sequence spans 152 residues: Probable ribose-5-phosphate isomerase B (152 aa).

Asp-12–His-13 serves as a coordination point for D-ribulose 5-phosphate. Cys-70 acts as the Proton acceptor in catalysis. A D-ribulose 5-phosphate-binding site is contributed by Gly-71–Gly-75. His-103 functions as the Proton donor in the catalytic mechanism. The D-ribulose 5-phosphate site is built by Asp-104, Arg-114, Arg-137, and Arg-141.

The protein belongs to the LacAB/RpiB family. In terms of assembly, homodimer.

It catalyses the reaction aldehydo-D-ribose 5-phosphate = D-ribulose 5-phosphate. The protein operates within carbohydrate degradation; pentose phosphate pathway; D-ribose 5-phosphate from D-ribulose 5-phosphate (non-oxidative stage): step 1/1. Functionally, catalyzes the interconversion of ribulose-5-P and ribose-5-P. The sequence is that of Probable ribose-5-phosphate isomerase B from Mycoplasma pneumoniae (strain ATCC 29342 / M129 / Subtype 1) (Mycoplasmoides pneumoniae).